The chain runs to 392 residues: Chloramphenicol resistance protein (392 aa).

The next 12 membrane-spanning stretches (helical) occupy residues 6–26 (YLLA…AGLV), 42–62 (TLTS…AALA), 71–91 (LLGF…TTSF), 100–120 (VAAL…AALV), 129–149 (LAVL…GGSL), 160–180 (FWAV…AIPA), 205–225 (LLLA…SFTF), 239–259 (LWIS…VTVA), 268–288 (AQVL…LAML), 294–314 (ALLT…STLI), 332–352 (ATAA…TTLG), and 358–378 (LGPL…AFPF).

This sequence belongs to the major facilitator superfamily.

It localises to the cell membrane. This chain is Chloramphenicol resistance protein (cmlR), found in Streptomyces lividans.